The primary structure comprises 861 residues: DNA mismatch repair protein MutS (861 aa).

An ATP-binding site is contributed by 618-625 (GPNMGGKS).

Belongs to the DNA mismatch repair MutS family.

Its function is as follows. This protein is involved in the repair of mismatches in DNA. It is possible that it carries out the mismatch recognition step. This protein has a weak ATPase activity. This is DNA mismatch repair protein MutS from Shewanella frigidimarina (strain NCIMB 400).